Here is a 342-residue protein sequence, read N- to C-terminus: Ribosomal RNA small subunit methyltransferase C (342 aa).

The protein belongs to the methyltransferase superfamily. RsmC family. As to quaternary structure, monomer.

It is found in the cytoplasm. The catalysed reaction is guanosine(1207) in 16S rRNA + S-adenosyl-L-methionine = N(2)-methylguanosine(1207) in 16S rRNA + S-adenosyl-L-homocysteine + H(+). Functionally, specifically methylates the guanine in position 1207 of 16S rRNA in the 30S particle. This is Ribosomal RNA small subunit methyltransferase C from Salmonella newport (strain SL254).